Reading from the N-terminus, the 162-residue chain is HTH-type transcriptional regulator IscR (162 aa).

One can recognise an HTH rrf2-type domain in the interval 2–131 (RLTSKGRYAV…NNITLGELVN (130 aa)). The H-T-H motif DNA-binding region spans 28–51 (LADISERQGISLSYLEQLFSRLRK). Cys92, Cys98, and Cys104 together coordinate [2Fe-2S] cluster.

It depends on [2Fe-2S] cluster as a cofactor.

Functionally, regulates the transcription of several operons and genes involved in the biogenesis of Fe-S clusters and Fe-S-containing proteins. The sequence is that of HTH-type transcriptional regulator IscR from Shigella sonnei (strain Ss046).